We begin with the raw amino-acid sequence, 491 residues long: Probable cytosol aminopeptidase (491 aa).

Mn(2+)-binding residues include K260 and D265. Residue K272 is part of the active site. Mn(2+)-binding residues include D284, D343, and E345. The active site involves R347.

It belongs to the peptidase M17 family. Mn(2+) serves as cofactor.

The protein localises to the cytoplasm. The enzyme catalyses Release of an N-terminal amino acid, Xaa-|-Yaa-, in which Xaa is preferably Leu, but may be other amino acids including Pro although not Arg or Lys, and Yaa may be Pro. Amino acid amides and methyl esters are also readily hydrolyzed, but rates on arylamides are exceedingly low.. It catalyses the reaction Release of an N-terminal amino acid, preferentially leucine, but not glutamic or aspartic acids.. Its function is as follows. Presumably involved in the processing and regular turnover of intracellular proteins. Catalyzes the removal of unsubstituted N-terminal amino acids from various peptides. This chain is Probable cytosol aminopeptidase, found in Rippkaea orientalis (strain PCC 8801 / RF-1) (Cyanothece sp. (strain PCC 8801)).